The primary structure comprises 456 residues: ACT domain-containing protein ACR5 (456 aa).

4 ACT domains span residues 39–115 (VIKV…FSPS), 130–207 (VVEL…SSGR), 271–347 (IVMI…VSEG), and 349–432 (KLEL…PSPQ).

Expressed in stems and siliques.

May bind amino acids. In Arabidopsis thaliana (Mouse-ear cress), this protein is ACT domain-containing protein ACR5.